The following is a 212-amino-acid chain: Large ribosomal subunit protein uL3 (212 aa).

Residues 135 to 156 are disordered; it reads MTHGNSRSHRVPGSIGQNQSPG. Q153 is modified (N5-methylglutamine).

Belongs to the universal ribosomal protein uL3 family. As to quaternary structure, part of the 50S ribosomal subunit. Forms a cluster with proteins L14 and L19. Post-translationally, methylated by PrmB.

One of the primary rRNA binding proteins, it binds directly near the 3'-end of the 23S rRNA, where it nucleates assembly of the 50S subunit. This chain is Large ribosomal subunit protein uL3, found in Tolumonas auensis (strain DSM 9187 / NBRC 110442 / TA 4).